We begin with the raw amino-acid sequence, 129 residues long: Histone H2A type 2-C (129 aa).

Residues 1 to 22 (MSGRGKQGGKARAKAKSRSSRA) are disordered. Ser-2 bears the N-acetylserine mark. Phosphoserine; by RPS6KA5 is present on Ser-2. The residue at position 4 (Arg-4) is a Citrulline; alternate. Arg-4 bears the Symmetric dimethylarginine; by PRMT5; alternate mark. N6-(2-hydroxyisobutyryl)lysine; alternate is present on residues Lys-6 and Lys-10. Position 6 is an N6-acetyllysine; alternate (Lys-6). Over residues 7–19 (QGGKARAKAKSRS) the composition is skewed to basic residues. Residue Lys-10 is modified to N6-lactoyllysine; alternate. Lys-10 is subject to N6-succinyllysine; alternate. Residues Lys-14 and Lys-16 each participate in a glycyl lysine isopeptide (Lys-Gly) (interchain with G-Cter in ubiquitin) cross-link. Lys-37 carries the post-translational modification N6-(2-hydroxyisobutyryl)lysine; alternate. Lys-37 carries the post-translational modification N6-(beta-hydroxybutyryl)lysine; alternate. Lys-37 carries the N6-crotonyllysine; alternate modification. 2 positions are modified to N6-(2-hydroxyisobutyryl)lysine: Lys-75 and Lys-76. Lys-96 bears the N6-(2-hydroxyisobutyryl)lysine; alternate mark. Lys-96 is subject to N6-succinyllysine; alternate. Lys-96 carries the post-translational modification N6-glutaryllysine; alternate. Lys-100 carries the N6-glutaryllysine modification. Gln-105 bears the N5-methylglutamine mark. Residue Lys-119 is modified to N6-(2-hydroxyisobutyryl)lysine; alternate. N6-crotonyllysine; alternate is present on residues Lys-119 and Lys-120. N6-glutaryllysine; alternate occurs at positions 119 and 120. A Glycyl lysine isopeptide (Lys-Gly) (interchain with G-Cter in ubiquitin); alternate cross-link involves residue Lys-120. Position 121 is a phosphothreonine; by DCAF1 (Thr-121). A Phosphoserine modification is found at Ser-123. N6-crotonyllysine is present on Lys-125.

This sequence belongs to the histone H2A family. The nucleosome is a histone octamer containing two molecules each of H2A, H2B, H3 and H4 assembled in one H3-H4 heterotetramer and two H2A-H2B heterodimers. The octamer wraps approximately 147 bp of DNA. Deiminated on Arg-4 in granulocytes upon calcium entry. In terms of processing, monoubiquitination of Lys-120 (H2AK119Ub) by RING1, TRIM37 and RNF2/RING2 complex gives a specific tag for epigenetic transcriptional repression and participates in X chromosome inactivation of female mammals. It is involved in the initiation of both imprinted and random X inactivation. Ubiquitinated H2A is enriched in inactive X chromosome chromatin. Ubiquitination of H2A functions downstream of methylation of 'Lys-27' of histone H3 (H3K27me). H2AK119Ub by RNF2/RING2 can also be induced by ultraviolet and may be involved in DNA repair. Following DNA double-strand breaks (DSBs), it is ubiquitinated through 'Lys-63' linkage of ubiquitin moieties by the E2 ligase UBE2N and the E3 ligases RNF8 and RNF168, leading to the recruitment of repair proteins to sites of DNA damage. Ubiquitination at Lys-14 and Lys-16 (H2AK13Ub and H2AK15Ub, respectively) in response to DNA damage is initiated by RNF168 that mediates monoubiquitination at these 2 sites, and 'Lys-63'-linked ubiquitin are then conjugated to monoubiquitin; RNF8 is able to extend 'Lys-63'-linked ubiquitin chains in vitro. H2AK119Ub and ionizing radiation-induced 'Lys-63'-linked ubiquitination (H2AK13Ub and H2AK15Ub) are distinct events. Post-translationally, phosphorylation on Ser-2 (H2AS1ph) is enhanced during mitosis. Phosphorylation on Ser-2 by RPS6KA5/MSK1 directly represses transcription. Acetylation of H3 inhibits Ser-2 phosphorylation by RPS6KA5/MSK1. Phosphorylation at Thr-121 (H2AT120ph) by DCAF1 is present in the regulatory region of many tumor suppresor genes and down-regulates their transcription. Symmetric dimethylation on Arg-4 by the PRDM1/PRMT5 complex may play a crucial role in the germ-cell lineage. In terms of processing, glutamine methylation at Gln-105 (H2AQ104me) by FBL is specifically dedicated to polymerase I. It is present at 35S ribosomal DNA locus and impairs binding of the FACT complex. Post-translationally, crotonylation (Kcr) is specifically present in male germ cells and marks testis-specific genes in post-meiotic cells, including X-linked genes that escape sex chromosome inactivation in haploid cells. Crotonylation marks active promoters and enhancers and confers resistance to transcriptional repressors. It is also associated with post-meiotically activated genes on autosomes. Lactylated in macrophages by EP300/P300 by using lactoyl-CoA directly derived from endogenous or exogenous lactate, leading to stimulates gene transcription.

Its subcellular location is the nucleus. It localises to the chromosome. Core component of nucleosome. Nucleosomes wrap and compact DNA into chromatin, limiting DNA accessibility to the cellular machineries which require DNA as a template. Histones thereby play a central role in transcription regulation, DNA repair, DNA replication and chromosomal stability. DNA accessibility is regulated via a complex set of post-translational modifications of histones, also called histone code, and nucleosome remodeling. This is Histone H2A type 2-C from Bos taurus (Bovine).